Reading from the N-terminus, the 208-residue chain is Imidazole glycerol phosphate synthase subunit HisH (208 aa).

Residues 1–206 form the Glutamine amidotransferase type-1 domain; it reads MFAIVDYDTG…KEMVSANDFS (206 aa). Cys79 (nucleophile) is an active-site residue. Active-site residues include His181 and Glu183.

In terms of assembly, heterodimer of HisH and HisF.

It is found in the cytoplasm. It carries out the reaction 5-[(5-phospho-1-deoxy-D-ribulos-1-ylimino)methylamino]-1-(5-phospho-beta-D-ribosyl)imidazole-4-carboxamide + L-glutamine = D-erythro-1-(imidazol-4-yl)glycerol 3-phosphate + 5-amino-1-(5-phospho-beta-D-ribosyl)imidazole-4-carboxamide + L-glutamate + H(+). It catalyses the reaction L-glutamine + H2O = L-glutamate + NH4(+). It functions in the pathway amino-acid biosynthesis; L-histidine biosynthesis; L-histidine from 5-phospho-alpha-D-ribose 1-diphosphate: step 5/9. Functionally, IGPS catalyzes the conversion of PRFAR and glutamine to IGP, AICAR and glutamate. The HisH subunit catalyzes the hydrolysis of glutamine to glutamate and ammonia as part of the synthesis of IGP and AICAR. The resulting ammonia molecule is channeled to the active site of HisF. This is Imidazole glycerol phosphate synthase subunit HisH from Lactiplantibacillus plantarum (strain ATCC BAA-793 / NCIMB 8826 / WCFS1) (Lactobacillus plantarum).